The sequence spans 340 residues: Terpene synthase 29 (340 aa).

The Mg(2+) site is built by D132, E197, N257, S261, and E265. The short motif at 132-138 is the DDXXXXD motif element; that stretch reads DEPDILE. The NSE/DTE motif motif lies at 257–265; sequence NDILSFYKE.

Belongs to the trichodiene synthase family. The cofactor is Mg(2+).

Terpene cyclase that catalyzes the cyclization of farnesyl diphosphate (FPP) to a single major terpene scaffold whose chemical structure is still unknown. The chain is Terpene synthase 29 from Postia placenta (strain ATCC 44394 / Madison 698-R) (Brown rot fungus).